The primary structure comprises 351 residues: DNA polymerase IV (351 aa).

One can recognise a UmuC domain in the interval 4–185 (IIHVDMDCFF…LPLAKIPGVG (182 aa)). The Mg(2+) site is built by Asp-8 and Asp-103. Glu-104 is a catalytic residue.

The protein belongs to the DNA polymerase type-Y family. As to quaternary structure, monomer. Mg(2+) serves as cofactor.

The protein localises to the cytoplasm. The enzyme catalyses DNA(n) + a 2'-deoxyribonucleoside 5'-triphosphate = DNA(n+1) + diphosphate. Its function is as follows. Poorly processive, error-prone DNA polymerase involved in untargeted mutagenesis. Copies undamaged DNA at stalled replication forks, which arise in vivo from mismatched or misaligned primer ends. These misaligned primers can be extended by PolIV. Exhibits no 3'-5' exonuclease (proofreading) activity. May be involved in translesional synthesis, in conjunction with the beta clamp from PolIII. The polypeptide is DNA polymerase IV (Escherichia coli (strain ATCC 8739 / DSM 1576 / NBRC 3972 / NCIMB 8545 / WDCM 00012 / Crooks)).